Consider the following 299-residue polypeptide: Bifunctional phosphoglucose/phosphomannose isomerase (299 aa).

The 151-residue stretch at 27 to 177 folds into the SIS domain; that stretch reads DEVEITPSSR…IHKLMEDFQK (151 aa). G44, S45, S84, S86, T89, and R132 together coordinate D-fructose 6-phosphate. E200 functions as the Proton acceptor in the catalytic mechanism. D-fructose 6-phosphate-binding residues include H216 and K295. H216 (proton donor) is an active-site residue. The active-site Proton acceptor is K295.

This sequence belongs to the PGI/PMI family. Homodimer.

It carries out the reaction alpha-D-glucose 6-phosphate = beta-D-fructose 6-phosphate. It catalyses the reaction D-mannose 6-phosphate = D-fructose 6-phosphate. Presence or absence of metal ions or EDTA does not significantly affect the phosphoglucose isomerase activity. Dual specificity isomerase that catalyzes the isomerization of both glucose-6-phosphate and mannose-6-phosphate to fructose-6-phosphate with nearly similar catalytic efficiency. Also catalyzes the epimerization of mannose 6-phosphate to glucose 6-phosphate but the rate of epimerization reaction is 20-fold lower than that of isomerization reaction. The protein is Bifunctional phosphoglucose/phosphomannose isomerase of Pyrobaculum calidifontis (strain DSM 21063 / JCM 11548 / VA1).